A 375-amino-acid polypeptide reads, in one-letter code: Coproporphyrin III ferrochelatase (375 aa).

Fe-coproporphyrin III is bound by residues S59 and Y128. 2 residues coordinate Fe(2+): H191 and E286.

The protein belongs to the ferrochelatase family.

The protein resides in the cytoplasm. It catalyses the reaction Fe-coproporphyrin III + 2 H(+) = coproporphyrin III + Fe(2+). It functions in the pathway porphyrin-containing compound metabolism; protoheme biosynthesis. Involved in coproporphyrin-dependent heme b biosynthesis. Catalyzes the insertion of ferrous iron into coproporphyrin III to form Fe-coproporphyrin III. The sequence is that of Coproporphyrin III ferrochelatase from Streptomyces griseus subsp. griseus (strain JCM 4626 / CBS 651.72 / NBRC 13350 / KCC S-0626 / ISP 5235).